The sequence spans 120 residues: Large ribosomal subunit protein uL18 (120 aa).

This sequence belongs to the universal ribosomal protein uL18 family. In terms of assembly, part of the 50S ribosomal subunit; part of the 5S rRNA/L5/L18/L25 subcomplex. Contacts the 5S and 23S rRNAs.

In terms of biological role, this is one of the proteins that bind and probably mediate the attachment of the 5S RNA into the large ribosomal subunit, where it forms part of the central protuberance. The sequence is that of Large ribosomal subunit protein uL18 from Rhizobium johnstonii (strain DSM 114642 / LMG 32736 / 3841) (Rhizobium leguminosarum bv. viciae).